We begin with the raw amino-acid sequence, 693 residues long: DNA ligase (693 aa).

NAD(+)-binding positions include 45–49 (DSEYD), 94–95 (SI), and E131. The N6-AMP-lysine intermediate role is filled by K133. NAD(+) contacts are provided by R154, E190, K307, and K331. Zn(2+) contacts are provided by C429, C432, C447, and C453. The 79-residue stretch at 615–693 (ASSSKLEGKT…EEGLLSLLAE (79 aa)) folds into the BRCT domain.

It belongs to the NAD-dependent DNA ligase family. LigA subfamily. Mg(2+) serves as cofactor. The cofactor is Mn(2+).

It carries out the reaction NAD(+) + (deoxyribonucleotide)n-3'-hydroxyl + 5'-phospho-(deoxyribonucleotide)m = (deoxyribonucleotide)n+m + AMP + beta-nicotinamide D-nucleotide.. Its function is as follows. DNA ligase that catalyzes the formation of phosphodiester linkages between 5'-phosphoryl and 3'-hydroxyl groups in double-stranded DNA using NAD as a coenzyme and as the energy source for the reaction. It is essential for DNA replication and repair of damaged DNA. This chain is DNA ligase, found in Methylobacillus flagellatus (strain ATCC 51484 / DSM 6875 / VKM B-1610 / KT).